The chain runs to 280 residues: Elongation factor Ts (280 aa).

Residues 79–82 (TDFV) form an involved in Mg(2+) ion dislocation from EF-Tu region.

The protein belongs to the EF-Ts family.

The protein resides in the cytoplasm. Its function is as follows. Associates with the EF-Tu.GDP complex and induces the exchange of GDP to GTP. It remains bound to the aminoacyl-tRNA.EF-Tu.GTP complex up to the GTP hydrolysis stage on the ribosome. In Treponema denticola (strain ATCC 35405 / DSM 14222 / CIP 103919 / JCM 8153 / KCTC 15104), this protein is Elongation factor Ts.